The sequence spans 404 residues: Cysteine desulfurase IscS (404 aa).

Residues Ala-75–Thr-76, Asn-155, Gln-183, and Ser-203–His-205 contribute to the pyridoxal 5'-phosphate site. At Lys-206 the chain carries N6-(pyridoxal phosphate)lysine. Residue Thr-243 participates in pyridoxal 5'-phosphate binding. Catalysis depends on Cys-328, which acts as the Cysteine persulfide intermediate. Residue Cys-328 participates in [2Fe-2S] cluster binding.

Belongs to the class-V pyridoxal-phosphate-dependent aminotransferase family. NifS/IscS subfamily. As to quaternary structure, homodimer. Forms a heterotetramer with IscU, interacts with other sulfur acceptors. Pyridoxal 5'-phosphate is required as a cofactor.

The protein resides in the cytoplasm. It carries out the reaction (sulfur carrier)-H + L-cysteine = (sulfur carrier)-SH + L-alanine. It functions in the pathway cofactor biosynthesis; iron-sulfur cluster biosynthesis. Its function is as follows. Master enzyme that delivers sulfur to a number of partners involved in Fe-S cluster assembly, tRNA modification or cofactor biosynthesis. Catalyzes the removal of elemental sulfur atoms from cysteine to produce alanine. Functions as a sulfur delivery protein for Fe-S cluster synthesis onto IscU, an Fe-S scaffold assembly protein, as well as other S acceptor proteins. This chain is Cysteine desulfurase IscS, found in Ruthia magnifica subsp. Calyptogena magnifica.